The sequence spans 445 residues: Rab GDP dissociation inhibitor beta (445 aa).

The residue at position 1 (M1) is an N-acetylmethionine. An N6-succinyllysine modification is found at K57. Residue K112 is modified to N6-acetyllysine. S130 bears the Phosphoserine mark. K269 is modified (N6-acetyllysine). S382 bears the Phosphoserine mark.

It belongs to the Rab GDI family. In terms of assembly, interacts with RHOH. Interacts with the GDP-bound inactive forms of RAB3A, RAB3B, RAB3C, RAB5A, RAB5B, RAB5C, RAB8A, RAB8B, RAB10, RAB12, RAB35, and RAB43; binds RAB3D to a lesser extent. Interacts with DZIP1; this interaction negatively regulates the interaction of GDI2 with GDP-bound RAB8A. As to expression, ubiquitously expressed.

It localises to the cytoplasm. It is found in the membrane. The protein resides in the golgi apparatus. The protein localises to the trans-Golgi network. Its function is as follows. GDP-dissociation inhibitor preventing the GDP to GTP exchange of most Rab proteins. By keeping these small GTPases in their inactive GDP-bound form regulates intracellular membrane trafficking. Negatively regulates protein transport to the cilium and ciliogenesis through the inhibition of RAB8A. This Bos taurus (Bovine) protein is Rab GDP dissociation inhibitor beta (GDI2).